The sequence spans 504 residues: 13S globulin seed storage protein 2 (504 aa).

The first 20 residues, 1 to 20 (MSTKLILSFSLCLMVLSCSA), serve as a signal peptide directing secretion. 2 disulfide bridges follow: cysteine 46-cysteine 79 and cysteine 122-cysteine 320. The region spanning 51–265 (LTASEPSRRV…FRDVDRETIS (215 aa)) is the Cupin type-1 1 domain. Disordered stretches follow at residues 128-158 (SDSE…GDQH), 214-237 (GQSQ…DDEA), and 289-314 (QDFE…RSNG). Basic and acidic residues-rich tracts occupy residues 144-158 (RQSE…GDQH) and 218-231 (RETR…QSRE). Residues 326 to 475 (RNFNTPTNTY…SYDISTKEAY (150 aa)) form the Cupin type-1 2 domain.

The protein belongs to the 11S seed storage protein (globulins) family. In terms of assembly, hexamer; each subunit is composed of an acidic and a basic chain derived from a single precursor and linked by a disulfide bond.

In terms of biological role, seed storage protein. The sequence is that of 13S globulin seed storage protein 2 (FA18) from Fagopyrum esculentum (Common buckwheat).